A 499-amino-acid chain; its full sequence is Putative antiporter subunit mnhD2 (499 aa).

14 helical membrane-spanning segments follow: residues 3 to 23, 33 to 53, 79 to 99, 109 to 129, 131 to 151, 162 to 182, 210 to 230, 241 to 261, 272 to 292, 309 to 329, 331 to 351, 370 to 390, 404 to 424, and 452 to 472; these read LSNL…ILVF, YLYL…LIYV, LSLI…AYGF, YHLP…FLTS, LFNL…LITL, IIYV…IGLL, ISLI…FMWL, LAAL…IRFF, IHPL…IGVI, IGFI…GAIF, LVND…LVYI, FGVA…FSGF, GNYI…YSLF, and ILSI…VVLN.

Belongs to the CPA3 antiporters (TC 2.A.63) subunit D family. May form a heterooligomeric complex that consists of seven subunits: mnhA2, mnhB2, mnhC2, mnhD2, mnhE2, mnhF2 and mnhG2.

The protein resides in the cell membrane. Functionally, expression of the mnh2 operon in E.coli is not able to catalyze Na(+)Li(+)/H(+) antiport. It does however confer higher growth rates than the control strain at up to pH 9.5. The operon may encode an NADH-ubiquinone oxidoreductase. This chain is Putative antiporter subunit mnhD2 (mnhD2), found in Staphylococcus aureus.